Here is a 508-residue protein sequence, read N- to C-terminus: MFS-type transporter penM (508 aa).

Residues 1-60 (MKDGEETPSVDGSTSASNREKLGTDLEIGPVDLSDGGKEEKVKDPNLVDWDGPDDPENPL) form a disordered region. Positions 35-46 (DGGKEEKVKDPN) are enriched in basic and acidic residues. N-linked (GlcNAc...) asparagine glycosylation is present at Asn-61. A helical membrane pass occupies residues 73-93 (SIALITFLTPLGSSMFAPGVG). N-linked (GlcNAc...) asparagine glycosylation is present at Asn-100. 6 helical membrane passes run 108 to 128 (SFVVSVYLLGYCFGPLIIAPL), 143 to 163 (ILYVIWTIACAFAPEIGSLVV), 166 to 186 (FFAGLAGSCPLTIGAGSIADM), 197 to 217 (AAWALGPLIGPVVGPVAGAYL), 225 to 245 (WSFYVLAMAAGAITISSLFSI), and 299 to 319 (PIVFLLSLYVGVIYGYLYLLF). Residues 293-307 (KMLFRSPIVFLLSLY) carry the Peroxisomal targeting signal motif. Asn-331 carries an N-linked (GlcNAc...) asparagine glycan. 5 helical membrane-spanning segments follow: residues 335 to 355 (GAVGLTYLGLGVGSLIGLFLI), 379 to 399 (LPPMVPGAIFVPISLFMYGWT), 407 to 427 (IVPIIGTSFLGTGMMITFMCV), 435 to 457 (FTNYAASVMAANTVFRSLAGALL), and 475 to 495 (SLLGFIALAFCALPVIFWIYG).

It belongs to the major facilitator superfamily.

It is found in the peroxisome membrane. In terms of biological role, MFS-type transporter involved in penicillin production, most likely through the translocation of isopenicillin N from the cytosol to the peroxisomal lumen across the peroxisomal membrane. This chain is MFS-type transporter penM, found in Penicillium rubens (strain ATCC 28089 / DSM 1075 / NRRL 1951 / Wisconsin 54-1255) (Penicillium chrysogenum).